Consider the following 373-residue polypeptide: sn-glycerol-3-phosphate import ATP-binding protein UgpC 2 (373 aa).

Positions 4-234 constitute an ABC transporter domain; the sequence is IDIRQVRKSY…PASTFVASFI (231 aa). Position 36-43 (36-43) interacts with ATP; sequence GPSGCGKS.

Belongs to the ABC transporter superfamily. sn-glycerol-3-phosphate importer (TC 3.A.1.1.3) family. The complex is composed of two ATP-binding proteins (UgpC), two transmembrane proteins (UgpA and UgpE) and a solute-binding protein (UgpB).

It is found in the cell inner membrane. It carries out the reaction sn-glycerol 3-phosphate(out) + ATP + H2O = sn-glycerol 3-phosphate(in) + ADP + phosphate + H(+). Part of the ABC transporter complex UgpBAEC involved in sn-glycerol-3-phosphate (G3P) import. Responsible for energy coupling to the transport system. This chain is sn-glycerol-3-phosphate import ATP-binding protein UgpC 2, found in Agrobacterium fabrum (strain C58 / ATCC 33970) (Agrobacterium tumefaciens (strain C58)).